The following is a 555-amino-acid chain: La-related protein 7 (555 aa).

Residues 36-127 (RSRVKQLLSD…RRKEPLGETP (92 aa)) form the HTH La-type RNA-binding domain. The region spanning 133–211 (RTVYVELLPK…PRKPGIFPKT (79 aa)) is the RRM domain. The tract at residues 218–327 (PFDAVTQDND…ENKDEELNSL (110 aa)) is disordered. Polar residues-rich tracts occupy residues 238–251 (KNST…NNMD), 258–274 (STVT…STVS), and 284–293 (SQSFEASSGE). Residues 295-356 (QFEMSSKMRK…ERLKVGEEVI (62 aa)) adopt a coiled-coil conformation. Basic and acidic residues predominate over residues 303-327 (RKVEEEKSELKDLSSENKDEELNSL). The 114-residue stretch at 425–538 (EFLSGVIVKI…TEKLISKAEK (114 aa)) folds into the xRRM domain.

Belongs to the LARP7 family. In terms of assembly, core component of the 7SK RNP complex. Associates with box C/D small nucleolar ribonucleoprotein (snoRNP) complexes.

It is found in the nucleus. It localises to the nucleoplasm. Functionally, RNA-binding protein that specifically binds distinct small nuclear RNA (snRNAs) and regulates their processing and function. Specifically binds the 7SK snRNA (7SK RNA) and acts as a core component of the 7SK ribonucleoprotein (RNP) complex, thereby acting as a negative regulator of transcription elongation by RNA polymerase II. The 7SK RNP complex sequesters the positive transcription elongation factor b (P-TEFb) in a large inactive 7SK RNP complex preventing RNA polymerase II phosphorylation and subsequent transcriptional elongation. The 7SK RNP complex also promotes snRNA gene transcription by RNA polymerase II via interaction with the little elongation complex (LEC). LARP7 specifically binds to the highly conserved 3'-terminal U-rich stretch of 7SK RNA; on stimulation, remains associated with 7SK RNA, whereas P-TEFb is released from the complex. LARP7 also acts as a regulator of mRNA splicing fidelity by promoting U6 snRNA processing. Specifically binds U6 snRNAs and associates with a subset of box C/D RNP complexes: promotes U6 snRNA 2'-O-methylation by facilitating U6 snRNA loading into box C/D RNP complexes. U6 snRNA 2'-O-methylation is required for mRNA splicing fidelity. This chain is La-related protein 7, found in Danio rerio (Zebrafish).